Consider the following 516-residue polypeptide: (R)-citramalate synthase CimA (516 aa).

Positions 8–269 constitute a Pyruvate carboxyltransferase domain; that stretch reads LEILDVTLRD…KTNINEIAIT (262 aa). R16 acts as the Proton donor in catalysis. Pyruvate contacts are provided by residues 16–17 and Y144; that span reads RD. Position 17 (D17) interacts with Mn(2+). The active-site Proton acceptor is E146. A pyruvate-binding site is contributed by T179. Residues H207 and H209 each contribute to the Mn(2+) site.

Belongs to the alpha-IPM synthase/homocitrate synthase family. In terms of assembly, homodimer. Requires Mn(2+) as cofactor.

It carries out the reaction pyruvate + acetyl-CoA + H2O = (3R)-citramalate + CoA + H(+). It functions in the pathway amino-acid biosynthesis; L-isoleucine biosynthesis; 2-oxobutanoate from pyruvate: step 1/3. Regulated by the end-product isoleucine via a feedback inhibition. The binding of isoleucine has inhibitory effects on the binding of both pyruvate and acetyl-CoA. May act via conformational change of the dimer interface of the regulatory domain, leading to inhibition of the catalytic reaction. Catalyzes the condensation of pyruvate and acetyl-coenzyme A to form (R)-citramalate. Shows strict substrate specificity for pyruvate. Cannot use alpha-ketoisovalerate, alpha-ketobutyrate, alpha-ketoisocaproate, alpha-ketoglutarate or glyoxylate. This chain is (R)-citramalate synthase CimA, found in Leptospira interrogans serogroup Icterohaemorrhagiae serovar Lai (strain 56601).